Consider the following 956-residue polypeptide: ATPase 11, plasma membrane-type (956 aa).

At Met1–Phe65 the chain is on the cytoplasmic side. The chain crosses the membrane as a helical span at residues Leu66 to Ile85. Residues Ala86–Trp97 lie on the Extracellular side of the membrane. Residues Gln98–Glu118 traverse the membrane as a helical segment. The Cytoplasmic portion of the chain corresponds to Asn119–Ile247. Residues Gly248 to Pro268 traverse the membrane as a helical segment. At Ile269–Gly277 the chain is on the extracellular side. A helical transmembrane segment spans residues Ile278–Thr295. Over Val296 to Lys647 the chain is Cytoplasmic. Asp333 functions as the 4-aspartylphosphate intermediate in the catalytic mechanism. Positions 592 and 596 each coordinate Mg(2+). The chain crosses the membrane as a helical span at residues Asn648–Leu669. Residues Ile670–Asp674 lie on the Extracellular side of the membrane. A helical membrane pass occupies residues Phe675–Asp697. At Arg698 to Ile713 the chain is on the cytoplasmic side. Residues Phe714 to Ala734 traverse the membrane as a helical segment. The Extracellular portion of the chain corresponds to Ala735–Arg759. The chain crosses the membrane as a helical span at residues Lys760 to Thr780. The Cytoplasmic segment spans residues Arg781 to Gly792. A helical membrane pass occupies residues Met793–Ala813. The Extracellular segment spans residues Asn814–Glu821. A helical membrane pass occupies residues Gly822–Leu842. Residues Asp843–Val956 are Cytoplasmic-facing. Thr889 carries the post-translational modification Phosphothreonine. At Ser938 the chain carries Phosphoserine. Residues Tyr954 to Val956 are interaction with 14-3-3 proteins. Phosphothreonine is present on Thr955.

The protein belongs to the cation transport ATPase (P-type) (TC 3.A.3) family. Type IIIA subfamily. Binds to 14-3-3 proteins. The binding is induced by phosphorylation of Thr-955. Binding to 14-3-3 proteins activates the H(+)-ATPase. In terms of tissue distribution, expressed in guard cells, mesophyll cells, leaves and roots.

The protein localises to the membrane. It carries out the reaction ATP + H2O + H(+)(in) = ADP + phosphate + 2 H(+)(out). The plasma membrane H(+) ATPase of plants and fungi generates a proton gradient that drives the active transport of nutrients by H(+)-symport. The resulting external acidification and/or internal alkinization may mediate growth responses. In Arabidopsis thaliana (Mouse-ear cress), this protein is ATPase 11, plasma membrane-type (AHA11).